A 290-amino-acid chain; its full sequence is 4-hydroxybenzoate octaprenyltransferase (290 aa).

8 helical membrane-spanning segments follow: residues 40 to 60 (IAGA…GVVI), 99 to 119 (LALF…LNEL), 120 to 140 (TFWL…TKRF), 142 to 162 (FMPQ…AFAA), 165 to 185 (GEVP…TVAY), 215 to 235 (LMIA…GHRL), 239 to 259 (WPWY…HSLI), and 267 to 287 (SFHA…GLYF).

Belongs to the UbiA prenyltransferase family. Requires Mg(2+) as cofactor.

The protein localises to the cell inner membrane. The enzyme catalyses all-trans-octaprenyl diphosphate + 4-hydroxybenzoate = 4-hydroxy-3-(all-trans-octaprenyl)benzoate + diphosphate. Its pathway is cofactor biosynthesis; ubiquinone biosynthesis. Catalyzes the prenylation of para-hydroxybenzoate (PHB) with an all-trans polyprenyl group. Mediates the second step in the final reaction sequence of ubiquinone-8 (UQ-8) biosynthesis, which is the condensation of the polyisoprenoid side chain with PHB, generating the first membrane-bound Q intermediate 3-octaprenyl-4-hydroxybenzoate. This is 4-hydroxybenzoate octaprenyltransferase from Alcanivorax borkumensis (strain ATCC 700651 / DSM 11573 / NCIMB 13689 / SK2).